Consider the following 105-residue polypeptide: Small ribosomal subunit protein uS10 (105 aa).

Belongs to the universal ribosomal protein uS10 family. As to quaternary structure, part of the 30S ribosomal subunit.

In terms of biological role, involved in the binding of tRNA to the ribosomes. The polypeptide is Small ribosomal subunit protein uS10 (Phytoplasma australiense).